The sequence spans 509 residues: Maturase K (509 aa).

Belongs to the intron maturase 2 family. MatK subfamily.

It localises to the plastid. The protein resides in the chloroplast. Functionally, usually encoded in the trnK tRNA gene intron. Probably assists in splicing its own and other chloroplast group II introns. This is Maturase K from Nicotiana plumbaginifolia (Leadwort-leaved tobacco).